Reading from the N-terminus, the 108-residue chain is LBH domain-containing protein 2 (108 aa).

Residues 1–11 (MSTPRPAPPQP) show a composition bias toward pro residues. Positions 1 to 108 (MSTPRPAPPQ…SEDPAAPARG (108 aa)) are disordered. In terms of domain architecture, LBH spans 37 to 62 (QRLPSIVVEPSEADPVESGELRWPLE). A compositionally biased stretch (low complexity) spans 63–85 (SAQRGPSQSRAAAAPSPSLPGEP).

The protein is LBH domain-containing protein 2 of Homo sapiens (Human).